A 198-amino-acid chain; its full sequence is Phosphoheptose isomerase (198 aa).

The SIS domain maps to 40–198; the sequence is IVTALRSGRK…IEAALMQDLS (159 aa). 55-57 contributes to the substrate binding site; the sequence is NGG. Zn(2+) is bound by residues His-64 and Glu-68. Substrate-binding positions include Glu-68, 97 to 98, 123 to 125, Ser-128, and Gln-175; these read ND and STS. Zn(2+) is bound by residues Gln-175 and His-183.

It belongs to the SIS family. GmhA subfamily. As to quaternary structure, homotetramer. Zn(2+) serves as cofactor.

It is found in the cytoplasm. The enzyme catalyses 2 D-sedoheptulose 7-phosphate = D-glycero-alpha-D-manno-heptose 7-phosphate + D-glycero-beta-D-manno-heptose 7-phosphate. Its pathway is carbohydrate biosynthesis; D-glycero-D-manno-heptose 7-phosphate biosynthesis; D-glycero-alpha-D-manno-heptose 7-phosphate and D-glycero-beta-D-manno-heptose 7-phosphate from sedoheptulose 7-phosphate: step 1/1. Functionally, catalyzes the isomerization of sedoheptulose 7-phosphate in D-glycero-D-manno-heptose 7-phosphate. The polypeptide is Phosphoheptose isomerase (Bradyrhizobium sp. (strain BTAi1 / ATCC BAA-1182)).